Reading from the N-terminus, the 398-residue chain is uncharacterized protein (398 aa).

Residues 88–108 (IGFTIGFAIFFILLFLLSNMV) traverse the membrane as a helical segment.

The protein to B.megaterium SpoIV.

The protein localises to the cell membrane. This is an uncharacterized protein from Bacillus subtilis (strain 168).